The following is a 606-amino-acid chain: MSSVKSGKSWIRQPIVVVLGHVDHGKTTLLDKIRGTAVAKKEPGEITQHVGASIVPASVLRKVAEPLKKYFPKLKIEIPGLLFVDTPGHELFSNLRRRGGSVADIAILVVDIMEGFQPQTWESIQILKERKVPFIVAANKIDRIPGWKPNHDQPFLETIRKQDPRIVSRLEELIYRLISQLYEAGFMAERFDRVKDFRTTVAIVPVSAKTGEGVPELLALLTGLVQRFMKKRLVTSEEPAKGVVLEVKEEPGLGTTIDVIIYDGVIRRGDTIVVGGKDKPIVTKVRALLMPRPLQDMRAHEGKFVSVEQVVAATGVKISAPDLDNALAGSPIFVVPSEDKIEEYIKIVKEEIESVRIKTDNIGVVVKADTLGTLEAVVEALKRENIPVRLADVGPVSKNDVLEASVSKNHRPEYGVIIAFNVKILPEAEEYAARENVKIFRHNVIYKLIEDYIGWVKQLREQEKIKELESLIRPGKIRILPGYIFRRSNPAIVGVEVIGGVIKPGYPLMRKDGMRLGTIMQIRDRDNVLKEARAGQSVAISIRGRILVGRHVDEGDILYTDIPKQHVHLWLTKYKNELSDDEKMVLKEIIEIKKKQDPFYGLVFGS.

One can recognise a tr-type G domain in the interval 11-230; it reads IRQPIVVVLG…LTGLVQRFMK (220 aa). Residues 20–27 are G1; it reads GHVDHGKT. GTP is bound at residue 20–27; that stretch reads GHVDHGKT. The G2 stretch occupies residues 45–49; it reads EITQH. Residues 85-88 form a G3 region; it reads DTPG. GTP is bound by residues 85–89 and 139–142; these read DTPGH and NKID. Residues 139–142 form a G4 region; sequence NKID. The G5 stretch occupies residues 207-209; that stretch reads SAK.

The protein belongs to the TRAFAC class translation factor GTPase superfamily. Classic translation factor GTPase family. IF-2 subfamily.

Function in general translation initiation by promoting the binding of the formylmethionine-tRNA to ribosomes. Seems to function along with eIF-2. This Staphylothermus marinus (strain ATCC 43588 / DSM 3639 / JCM 9404 / F1) protein is Probable translation initiation factor IF-2.